The chain runs to 270 residues: Diaminopimelate epimerase (270 aa).

Substrate contacts are provided by asparagine 15, glutamine 49, and asparagine 66. Cysteine 75 (proton donor) is an active-site residue. Substrate-binding positions include 76–77, asparagine 155, asparagine 187, and 204–205; these read GN and ER. The active-site Proton acceptor is cysteine 213. 214–215 serves as a coordination point for substrate; sequence GS.

It belongs to the diaminopimelate epimerase family. Homodimer.

Its subcellular location is the cytoplasm. It catalyses the reaction (2S,6S)-2,6-diaminopimelate = meso-2,6-diaminopimelate. It participates in amino-acid biosynthesis; L-lysine biosynthesis via DAP pathway; DL-2,6-diaminopimelate from LL-2,6-diaminopimelate: step 1/1. In terms of biological role, catalyzes the stereoinversion of LL-2,6-diaminopimelate (L,L-DAP) to meso-diaminopimelate (meso-DAP), a precursor of L-lysine and an essential component of the bacterial peptidoglycan. In Rickettsia prowazekii (strain Madrid E), this protein is Diaminopimelate epimerase.